Consider the following 382-residue polypeptide: Alkanesulfonate monooxygenase (382 aa).

This sequence belongs to the SsuD family. As to quaternary structure, homotetramer.

The catalysed reaction is an alkanesulfonate + FMNH2 + O2 = an aldehyde + FMN + sulfite + H2O + 2 H(+). Functionally, catalyzes the desulfonation of aliphatic sulfonates. The protein is Alkanesulfonate monooxygenase of Yersinia pseudotuberculosis serotype O:1b (strain IP 31758).